We begin with the raw amino-acid sequence, 582 residues long: Zinc finger protein somi-1 (582 aa).

2 disordered regions span residues 179-251 (LRPE…NNTD) and 352-377 (SAEPMKRHRVEAHEKQSPKKKVKKEQ). Over residues 188–226 (TQKSTNGVHRSTSNSSAETLRNNSVSAATVSPSDDNSLN) the composition is skewed to polar residues. Residues 227–244 (SPALTSSGSAGSGTPPLG) show a composition bias toward low complexity. Basic and acidic residues predominate over residues 352 to 368 (SAEPMKRHRVEAHEKQS). Residues 454-477 (YICEDCDFVTVYKGNMKRHLNTCH) form a C2H2-type; Degenerate zinc finger. A disordered region spans residues 513–582 (AHKANSSRGR…PPPPPPPMLL (70 aa)). Residues 551-570 (LLESLASSSSSMGGYSNGNN) show a composition bias toward low complexity. The segment covering 572 to 582 (QPPPPPPPMLL) has biased composition (pro residues).

May interact with swsn-9; the interaction promotes hypodermal differentiation. As to expression, expressed in hypodermal seam cells, the somatic gonad and vulval precursor cells, body wall muscle and head neurons.

Its subcellular location is the nucleus. In terms of biological role, DNA-binding protein which binds to the promoters of let-60, lin-14 and lin-28, possibly to regulate genes involved in hypodermal and vulval development. Together with miRNAs mir-84 and let-7 may direct terminal differentiation of the seam cells, exit from the molting cycle, and vulva formation. Does not regulate the expression of mir-84. May promote hypodermal differentiation in association with swsn-9, a component of SWI/SNF chromatin remodeling complexes. The polypeptide is Zinc finger protein somi-1 (Caenorhabditis elegans).